Reading from the N-terminus, the 271-residue chain is Mannosyl-3-phosphoglycerate phosphatase (271 aa).

The Nucleophile role is filled by D13. Positions 13, 15, and 214 each coordinate Mg(2+).

Belongs to the HAD-like hydrolase superfamily. MPGP family. It depends on Mg(2+) as a cofactor.

It is found in the cytoplasm. It carries out the reaction 2-O-(alpha-D-mannosyl)-3-phosphoglycerate + H2O = (2R)-2-O-(alpha-D-mannosyl)-glycerate + phosphate. This is Mannosyl-3-phosphoglycerate phosphatase from Escherichia coli O81 (strain ED1a).